We begin with the raw amino-acid sequence, 220 residues long: Adenylate kinase (220 aa).

13–18 contacts ATP; that stretch reads GAGKGT. Residues 33-62 form an NMP region; it reads STGDILRAAVKEGTPLGLEAQSYMNRGALV. AMP contacts are provided by residues threonine 34, arginine 39, 60–62, 88–91, and glutamine 95; these read ALV and GFPR. The tract at residues 129–170 is LID; it reads GRRTCPLCKRIFHVRFNPPPAAPPFCTDHTDCPSELVQRPDD. Arginine 130 lines the ATP pocket. The Zn(2+) site is built by cysteine 133 and cysteine 136. 139-140 is a binding site for ATP; that stretch reads IF. The Zn(2+) site is built by aspartate 156 and cysteine 160. AMP-binding residues include arginine 167 and arginine 178. Arginine 206 contacts ATP.

This sequence belongs to the adenylate kinase family. Monomer.

The protein localises to the cytoplasm. It carries out the reaction AMP + ATP = 2 ADP. It functions in the pathway purine metabolism; AMP biosynthesis via salvage pathway; AMP from ADP: step 1/1. In terms of biological role, catalyzes the reversible transfer of the terminal phosphate group between ATP and AMP. Plays an important role in cellular energy homeostasis and in adenine nucleotide metabolism. This Gloeobacter violaceus (strain ATCC 29082 / PCC 7421) protein is Adenylate kinase.